Reading from the N-terminus, the 512-residue chain is Maturase K (512 aa).

This sequence belongs to the intron maturase 2 family. MatK subfamily.

Its subcellular location is the plastid. The protein resides in the chloroplast. Functionally, usually encoded in the trnK tRNA gene intron. Probably assists in splicing its own and other chloroplast group II introns. The sequence is that of Maturase K from Oenothera parviflora (Small-flowered evening primrose).